The sequence spans 328 residues: Phosphate acyltransferase (328 aa).

The protein belongs to the PlsX family. Homodimer. Probably interacts with PlsY.

The protein localises to the cytoplasm. The enzyme catalyses a fatty acyl-[ACP] + phosphate = an acyl phosphate + holo-[ACP]. It functions in the pathway lipid metabolism; phospholipid metabolism. Catalyzes the reversible formation of acyl-phosphate (acyl-PO(4)) from acyl-[acyl-carrier-protein] (acyl-ACP). This enzyme utilizes acyl-ACP as fatty acyl donor, but not acyl-CoA. This is Phosphate acyltransferase from Staphylococcus aureus (strain Mu3 / ATCC 700698).